The chain runs to 1499 residues: ABC multidrug transporter A-2 (1499 aa).

Disordered regions lie at residues 1-66 (MAMQ…IDQE) and 80-107 (QISQ…NSDK). A compositionally biased stretch (polar residues) spans 16-30 (ISSSAGQEVASTIRR). Positions 31–51 (QFTDADADRIVETPLGEKADS) are enriched in basic and acidic residues. The segment covering 80-94 (QISQKSAGPTNTFLD) has biased composition (polar residues). In terms of domain architecture, ABC transporter 1 spans 166-415 (LRSILGCRNR…FIDMGFDCPD (250 aa)). Asn339 carries N-linked (GlcNAc...) asparagine glycosylation. Helical transmembrane passes span 526–546 (MTLA…SVFY), 561–581 (LLFF…LTLW), 606–626 (MIVD…ILYF), 635–655 (GHFF…SNIF), and 669–689 (MVPS…TIPV). Asn763 is a glycosylation site (N-linked (GlcNAc...) asparagine). Residues 778 to 798 (GIILGFFFFFLAAYIICSELV) form a helical membrane-spanning segment. In terms of domain architecture, ABC transporter 2 spans 857-1100 (FHWQDVCYDI…LIKYFENKGS (244 aa)). ATP is bound at residue 893 to 900 (GVTGAGKT). The next 5 helical transmembrane spans lie at 1193 to 1213 (YIYS…FTFW), 1227 to 1247 (FAIF…MPYF), 1268 to 1288 (AFML…AVPA), 1317 to 1337 (LLIL…IAGI), and 1353 to 1373 (LCLI…FWIF). Asn1414 is a glycosylation site (N-linked (GlcNAc...) asparagine). The helical transmembrane segment at 1466–1486 (GLLFVYIVFNIFAAIFLYWLI) threads the bilayer.

Belongs to the ABC transporter superfamily. ABCG family. PDR (TC 3.A.1.205) subfamily.

The protein localises to the cell membrane. It carries out the reaction itraconazole(in) + ATP + H2O = itraconazole(out) + ADP + phosphate + H(+). It catalyses the reaction voriconazole(in) + ATP + H2O = voriconazole(out) + ADP + phosphate + H(+). Its activity is regulated as follows. The efflux inhibitor FK506 impairs the transport activity. Its function is as follows. Pleiotropic ABC efflux transporter that confers resistance to structurally and functionally unrelated compounds including azoles such as itraconazole, posaconazole, and voriconazole. This is ABC multidrug transporter A-2 from Aspergillus fumigatus (strain ATCC MYA-4609 / CBS 101355 / FGSC A1100 / Af293) (Neosartorya fumigata).